A 296-amino-acid polypeptide reads, in one-letter code: GTPase Era (296 aa).

One can recognise an Era-type G domain in the interval 7–174 (HCGFVAIVGR…LDQVRPHLPE (168 aa)). The G1 stretch occupies residues 15 to 22 (GRPNVGKS). Residue 15–22 (GRPNVGKS) participates in GTP binding. Residues 41 to 45 (QTTRH) are G2. Residues 62-65 (DTPG) form a G3 region. Residues 62-66 (DTPGF) and 123-126 (NKLD) each bind GTP. The interval 123–126 (NKLD) is G4. The tract at residues 153-155 (VSA) is G5. One can recognise a KH type-2 domain in the interval 205 to 281 (LGEELPYEMN…FLQVWVKVKS (77 aa)).

Belongs to the TRAFAC class TrmE-Era-EngA-EngB-Septin-like GTPase superfamily. Era GTPase family. Monomer.

It localises to the cytoplasm. The protein resides in the cell inner membrane. Its function is as follows. An essential GTPase that binds both GDP and GTP, with rapid nucleotide exchange. Plays a role in 16S rRNA processing and 30S ribosomal subunit biogenesis and possibly also in cell cycle regulation and energy metabolism. The protein is GTPase Era of Chromobacterium violaceum (strain ATCC 12472 / DSM 30191 / JCM 1249 / CCUG 213 / NBRC 12614 / NCIMB 9131 / NCTC 9757 / MK).